Here is a 117-residue protein sequence, read N- to C-terminus: Multidrug resistance protein EbrB (117 aa).

4 consecutive transmembrane segments (helical) span residues glycine 3–leucine 23, tryptophan 31–leucine 51, alanine 59–phenylalanine 79, and glutamate 81–leucine 101.

This sequence belongs to the drug/metabolite transporter (DMT) superfamily. Small multidrug resistance (SMR) (TC 2.A.7.1) family. EbrA/EbrB subfamily. In terms of assembly, the efflux pump is composed of EbrA and EbrB.

The protein localises to the cell membrane. In terms of biological role, part of a multidrug efflux pump. Confers resistance to cationic lipophilic dyes such as ethidium bromide, acriflavine, pyronine Y and safranin O. The efflux is probably coupled to an influx of protons. The chain is Multidrug resistance protein EbrB (ebrB) from Bacillus atrophaeus.